Here is a 229-residue protein sequence, read N- to C-terminus: Peroxiredoxin-like 2A (229 aa).

The thioredoxin fold stretch occupies residues 14–112 (MWSIGVGAFG…DELGVPLYAV (99 aa)). Active-site redox-active residues include cysteine 85 and cysteine 88.

The protein belongs to the peroxiredoxin-like PRXL2 family. PRXL2A subfamily. In terms of tissue distribution, expressed by the principal cells of the epididymis. Detected in the head region of epididymal sperm (at protein level). Expressed in bone marrow.

Its subcellular location is the cytoplasm. The protein resides in the secreted. In terms of biological role, involved in redox regulation of the cell. Acts as an antioxidant. Inhibits TNFSF11-induced NFKB1 and JUN activation and osteoclast differentiation. May affect bone resorption and help to maintain bone mass. Acts as a negative regulator of macrophage-mediated inflammation by inhibiting macrophage production of inflammatory cytokines, probably through suppression of the MAPK signaling pathway. In Rattus norvegicus (Rat), this protein is Peroxiredoxin-like 2A.